Here is a 311-residue protein sequence, read N- to C-terminus: Meteorin-like protein (311 aa).

Residues 1-45 (MRGVVWAARRRAGQQWPRSPGPGPGPPPPPPLLLLLLLLLGGASA) form the signal peptide. The cysteines at positions 52 and 75 are disulfide-linked. N-linked (GlcNAc...) asparagine glycosylation occurs at Asn-103. Intrachain disulfides connect Cys-107–Cys-143, Cys-188–Cys-260, Cys-191–Cys-284, and Cys-201–Cys-306.

The protein belongs to the meteorin family. In terms of tissue distribution, abundantly expressed in adipose tissue.

The protein localises to the secreted. Hormone induced following exercise or cold exposure that promotes energy expenditure. Induced either in the skeletal muscle after exercise or in adipose tissue following cold exposure and is present in the circulation. Able to stimulate energy expenditure associated with the browning of the white fat depots and improves glucose tolerance. Does not promote an increase in a thermogenic gene program via direct action on adipocytes, but acts by stimulating several immune cell subtypes to enter the adipose tissue and activate their prothermogenic actions. Stimulates an eosinophil-dependent increase in IL4 expression and promotes alternative activation of adipose tissue macrophages, which are required for the increased expression of the thermogenic and anti-inflammatory gene programs in fat. Required for some cold-induced thermogenic responses, suggesting a role in metabolic adaptations to cold temperatures. This Rattus norvegicus (Rat) protein is Meteorin-like protein (Metrnl).